The primary structure comprises 99 residues: Complement inhibitor RaCI7 (99 aa).

A signal peptide spans 1-24; the sequence is MAALNGLVLLLLTISAMFISECYS. 3 cysteine pairs are disulfide-bonded: C37/C61, C42/C63, and C57/C78.

This sequence belongs to the RaCI family. In terms of tissue distribution, expressed in salivary glands.

The protein resides in the secreted. In terms of biological role, complement inhibitor. Prevents complement-mediated C5 activation by binding to C5. Binds C5 at a different binding site than the other tick complement inhibitors OmCI and CirpT1, and the drug eculizumab. This is Complement inhibitor RaCI7 from Dermacentor andersoni (Rocky mountain wood tick).